The primary structure comprises 343 residues: UDP-3-O-acylglucosamine N-acyltransferase (343 aa).

Residue H237 is the Proton acceptor of the active site.

Belongs to the transferase hexapeptide repeat family. LpxD subfamily. As to quaternary structure, homotrimer.

The enzyme catalyses a UDP-3-O-[(3R)-3-hydroxyacyl]-alpha-D-glucosamine + a (3R)-hydroxyacyl-[ACP] = a UDP-2-N,3-O-bis[(3R)-3-hydroxyacyl]-alpha-D-glucosamine + holo-[ACP] + H(+). It participates in bacterial outer membrane biogenesis; LPS lipid A biosynthesis. Functionally, catalyzes the N-acylation of UDP-3-O-acylglucosamine using 3-hydroxyacyl-ACP as the acyl donor. Is involved in the biosynthesis of lipid A, a phosphorylated glycolipid that anchors the lipopolysaccharide to the outer membrane of the cell. This is UDP-3-O-acylglucosamine N-acyltransferase from Synechococcus sp. (strain JA-3-3Ab) (Cyanobacteria bacterium Yellowstone A-Prime).